Reading from the N-terminus, the 1250-residue chain is Phospholipid-transporting ATPase IC (1250 aa).

Composition is skewed to acidic residues over residues 1-13 (MDTD…EDDS) and 24-40 (SDDE…TDEP). The segment at 1 to 52 (MDTDYESTYEDDSQVPNDDVVPYSDDETDDELDSPQTDEPEQNRRNVQAEQS) is disordered. The Cytoplasmic segment spans residues 1–133 (MDTDYESTYE…VLLILQTIPQ (133 aa)). A helical membrane pass occupies residues 134–154 (ISTVTWSTTLIPLLLVLGITA). Residues 155–338 (IKDLVDDIAR…TKIDYLMNYM (184 aa)) lie on the Exoplasmic loop side of the membrane. A helical membrane pass occupies residues 339–359 (VYTIFVLLILAAAGLAIGQTF). Residues 360–385 (WEAKLGAANVSWYLYDGNNYSPSYRG) are Cytoplasmic-facing. The helical transmembrane segment at 386–406 (FLAFWGYIIVLNTMVPISLYV) threads the bilayer. The Exoplasmic loop portion of the chain corresponds to 407-956 (SVEVIRLGQS…KFLRYFFYKN (550 aa)). The active-site 4-aspartylphosphate intermediate is Asp454. The ATP site is built by Asp454, Lys455, Thr456, Glu553, Phe594, Lys617, Arg650, Thr730, Gly731, Asp732, Arg865, and Lys871. Residue Asp454 participates in Mg(2+) binding. Thr456 serves as a coordination point for Mg(2+). Mg(2+) is bound at residue Asp891. 2 residues coordinate ATP: Asn894 and Asp895. Asp895 lines the Mg(2+) pocket. The helical transmembrane segment at 957-977 (FSFTLVHFWYSFFNGFSAQTV) threads the bilayer. The Cytoplasmic portion of the chain corresponds to 978–980 (YED). Residues 981–1001 (WFITLYNVLYSSLPVLLVGLL) form a helical membrane-spanning segment. At 1002–1034 (DQDVSDKLSLAFPRLYVPGQKDLLFNYKKFFLS) the chain is on the exoplasmic loop side. A helical membrane pass occupies residues 1035-1055 (LFHGIVTSLIIFFIPYGAFLL). At 1056-1069 (TMGQDGEAPSDYQS) the chain is on the cytoplasmic side. The chain crosses the membrane as a helical span at residues 1070–1090 (FAVTTATALVITVNFQIGLDT). Topologically, residues 1091–1092 (SY) are exoplasmic loop. A helical transmembrane segment spans residues 1093-1113 (WTFVNAFSIFGSIAIYFGIMF). Over 1114-1117 (DLHS) the chain is Cytoplasmic. The helical transmembrane segment at 1118 to 1138 (AGIHVLFPSMFIFTGAAPNAL) threads the bilayer. At 1139–1140 (RQ) the chain is on the exoplasmic loop side. A helical transmembrane segment spans residues 1141–1161 (PYLWLTIILTVAFCLLPIVAL). The Cytoplasmic portion of the chain corresponds to 1162–1250 (RFLAKTIWPS…AQITHFTPQT (89 aa)).

The protein belongs to the cation transport ATPase (P-type) (TC 3.A.3) family. Type IV subfamily. Component of a P4-ATPase flippase complex which consists of a catalytic alpha subunit and an accessory beta subunit. The flippase ATP8B1:TMEM30A complex can form an intermediate phosphoenzyme in vitro. Also interacts with beta subunit TMEM30B. Mg(2+) serves as cofactor.

It is found in the cell membrane. It localises to the apical cell membrane. Its subcellular location is the cell projection. The protein resides in the stereocilium. The protein localises to the endoplasmic reticulum. It is found in the golgi apparatus. The catalysed reaction is ATP + H2O + phospholipidSide 1 = ADP + phosphate + phospholipidSide 2.. It carries out the reaction a 1,2-diacyl-sn-glycero-3-phospho-L-serine(out) + ATP + H2O = a 1,2-diacyl-sn-glycero-3-phospho-L-serine(in) + ADP + phosphate + H(+). Catalytic component of a P4-ATPase flippase complex which catalyzes the hydrolysis of ATP coupled to the transport of aminophospholipids from the outer to the inner leaflet of various membranes and ensures the maintenance of asymmetric distribution of phospholipids. Phospholipid translocation also seems to be implicated in vesicle formation and in uptake of lipid signaling molecules. May also participate in the establishment of the canalicular membrane integrity by ensuring asymmetric distribution of phospholipids in the canicular membrane. The protein is Phospholipid-transporting ATPase IC (atp8b1) of Xenopus tropicalis (Western clawed frog).